The primary structure comprises 161 residues: MKYDTSELCDIYHEEVNVVEPLFSNFGGRTSFGGKITTVKCFEDNGLLFDLFEENGLGRVLLIDGGGSVRRALINAELARLATQNEWEGIVVYGAVRQVDDLAELDIGIQAMAAIPVGAGSEGIGESDIRVNFGGVTFFSGDHLYADNTGIILSEDPLDIE.

This sequence belongs to the RraA family. In terms of assembly, homotrimer. Binds to both RNA-binding sites in the C-terminal region of Rne and to RhlB.

The protein resides in the cytoplasm. Its function is as follows. Globally modulates RNA abundance by binding to RNase E (Rne) and regulating its endonucleolytic activity. Can modulate Rne action in a substrate-dependent manner by altering the composition of the degradosome. Modulates RNA-binding and helicase activities of the degradosome. The polypeptide is Regulator of ribonuclease activity A (Pectobacterium atrosepticum (strain SCRI 1043 / ATCC BAA-672) (Erwinia carotovora subsp. atroseptica)).